Reading from the N-terminus, the 213-residue chain is rRNA N(6)-adenosine-methyltransferase Mettl5 (213 aa).

S-adenosyl-L-methionine contacts are provided by residues glutamine 28, threonine 31, glycine 59, cysteine 62, and 108 to 109 (DV).

Belongs to the methyltransferase superfamily. PrmA family. As to quaternary structure, heterodimer; heterodimerizes with Trmt112. As to expression, enriched in the brain.

The protein resides in the cytoplasm. The catalysed reaction is adenosine in rRNA + S-adenosyl-L-methionine = N(6)-methyladenosine in rRNA + S-adenosyl-L-homocysteine + H(+). Functionally, catalytic subunit of a heterodimer with Trmt112, which specifically methylates the 6th position of adenine in 18S rRNA. This Drosophila melanogaster (Fruit fly) protein is rRNA N(6)-adenosine-methyltransferase Mettl5.